The following is a 168-amino-acid chain: Pleiotrophin (168 aa).

The signal sequence occupies residues 1–32 (MQTPQFLQQRRKFAAAFLAFIFLLAVVDTAEA). 5 disulfide bridges follow: Cys-47–Cys-76, Cys-55–Cys-85, Cys-62–Cys-89, Cys-99–Cys-131, and Cys-109–Cys-141. 2 chondroitin sulfate binding regions span residues 92-99 (KKQFGAEC) and 123-131 (KRALHNADC). A disordered region spans residues 139-168 (KPCGKVTKPKPQAESKKKKKEGKKQEKMLD). Residues 147–168 (PKPQAESKKKKKEGKKQEKMLD) are chondroitin sulfate A binding.

The protein belongs to the pleiotrophin family. In terms of assembly, interacts with ALK and NEK6. Interacts with PTPRZ1 (via chondroitin sulfate groups); promotes formation of homooligomers; oligomerization impairs tyrosine phosphatase activity. Forms a complex with PTPRZ1 and CTNNB1; this complex inactivates PTPRZ1 protein tyrosine phosphatase activity through PTN interaction and stimulates tyrosine phosphorylation of CTNNB1. Interacts with ITGB3 and ITGA5. Forms a complex with PTPRZ1 and integrin alpha-V/beta-3 (ITGAV:ITGB3) that stimulates endothelial cell migration through ITGB3 'Tyr-773' phosphorylation. Interacts with SDC3 (via heparan sulfate chains); this interaction mediates the neurite outgrowth-promoting signal from PTN to the cytoskeleton of growing neurites; this interaction mediates osteoblast recruitment. Interacts with GPC2 (via heparan sulfate); this interaction promotes neurite outgrowth through binding of PTN with chondroitin sulfate of proteoglycans, thereby releasing PTPRS of chondroitin sulfate proteoglycans (CSPGs) and leading to binding with heparan sulfate of GPC2. In terms of processing, phosphorylated by NEK6.

The protein localises to the secreted. Functionally, secreted growth factor that mediates its signal through cell-surface proteoglycan and non-proteoglycan receptors. Binds cell-surface proteoglycan receptor via their chondroitin sulfate (CS) groups. Thereby regulates many processes like cell proliferation, cell survival, cell growth, cell differentiation and cell migration in several tissues namely neuron and bone. Also plays a role in synaptic plasticity and learning-related behavior by inhibiting long-term synaptic potentiation. Binds PTPRZ1, leading to neutralization of the negative charges of the CS chains of PTPRZ1, inducing PTPRZ1 clustering, thereby causing the dimerization and inactivation of its phosphatase activity leading to increased tyrosine phosphorylation of each of the PTPRZ1 substrates like ALK, CTNNB1 or AFAP1L2 in order to activate the PI3K-AKT pathway. Through PTPRZ1 binding controls oligodendrocyte precursor cell differentiation by enhancing the phosphorylation of AFAP1L2 in order to activate the PI3K-AKT pathway. Forms a complex with PTPRZ1 and integrin alpha-V/beta-3 (ITGAV:ITGB3) that stimulates endothelial cell migration through SRC dephosphorylation and activation that consequently leads to ITGB3 'Tyr-773' phosphorylation. In adult hippocampus promotes dendritic arborization, spine development, and functional integration and connectivity of newborn granule neurons through ALK by activating AKT signaling pathway. Binds GPC2 and chondroitin sulfate proteoglycans (CSPGs) at the neuron surface, leading to abrogation of binding between PTPRS and CSPGs and neurite outgrowth promotion. Binds SDC3 and mediates bone formation by recruiting and attaching osteoblasts/osteoblast precursors to the sites for new bone deposition. Binds ALK and promotes cell survival and cell proliferation through MAPK pathway activation. Inhibits proliferation and enhances differentiation of neural stem cells by inhibiting FGF2-induced fibroblast growth factor receptor signaling pathway. Mediates regulatory mechanisms in normal hemostasis and in hematopoietic regeneration and in maintaining the balance of myeloid and lymphoid regeneration. In addition may play a role in the female reproductive system, auditory response and the progesterone-induced decidualization pathway. This is Pleiotrophin from Sus scrofa (Pig).